The chain runs to 145 residues: Ribonuclease P protein component (145 aa).

Residues 119 to 145 (PLPAAPGTMPPARTVRPSSPSPTEPEL) form a disordered region.

Belongs to the RnpA family. As to quaternary structure, consists of a catalytic RNA component (M1 or rnpB) and a protein subunit.

The enzyme catalyses Endonucleolytic cleavage of RNA, removing 5'-extranucleotides from tRNA precursor.. Functionally, RNaseP catalyzes the removal of the 5'-leader sequence from pre-tRNA to produce the mature 5'-terminus. It can also cleave other RNA substrates such as 4.5S RNA. The protein component plays an auxiliary but essential role in vivo by binding to the 5'-leader sequence and broadening the substrate specificity of the ribozyme. The protein is Ribonuclease P protein component of Xanthomonas euvesicatoria pv. vesicatoria (strain 85-10) (Xanthomonas campestris pv. vesicatoria).